We begin with the raw amino-acid sequence, 520 residues long: Glucose-1-phosphate adenylyltransferase small subunit, chloroplastic (520 aa).

The N-terminal 71 residues, 1–71 (MASVSAIGVL…RNPIIVSPKA (71 aa)), are a transit peptide targeting the chloroplast.

It belongs to the bacterial/plant glucose-1-phosphate adenylyltransferase family. In terms of assembly, heterotetramer. As to expression, leaves.

The protein resides in the plastid. Its subcellular location is the chloroplast. The enzyme catalyses alpha-D-glucose 1-phosphate + ATP + H(+) = ADP-alpha-D-glucose + diphosphate. The protein operates within glycan biosynthesis; starch biosynthesis. Its activity is regulated as follows. Activated by 3'phosphoglycerate, inhibited by orthophosphate. Allosteric regulation. In terms of biological role, this protein plays a role in synthesis of starch. It catalyzes the synthesis of the activated glycosyl donor, ADP-glucose from Glc-1-P and ATP. This chain is Glucose-1-phosphate adenylyltransferase small subunit, chloroplastic (APS1), found in Arabidopsis thaliana (Mouse-ear cress).